The sequence spans 193 residues: Ion-translocating oxidoreductase complex subunit B (193 aa).

A hydrophobic region spans residues 1-23 (MTFLFIVITLLALIFGAILGFAS). A 4Fe-4S domain is found at 29-87 (EADPVVEKIDAILPQSQCGQCGYPGCKPYAEAICNGDEITKCIPGGQTTIVKIAEILGV). Positions 46, 49, 54, 70, 110, 113, 116, 120, 140, 143, 146, and 150 each coordinate [4Fe-4S] cluster. 4Fe-4S ferredoxin-type domains follow at residues 101 to 130 (KVAF…GTNK) and 131 to 160 (AMHT…MIPV).

The protein belongs to the 4Fe4S bacterial-type ferredoxin family. RnfB subfamily. The complex is composed of six subunits: RnfA, RnfB, RnfC, RnfD, RnfE and RnfG. The cofactor is [4Fe-4S] cluster.

Its subcellular location is the cell inner membrane. Functionally, part of a membrane-bound complex that couples electron transfer with translocation of ions across the membrane. This chain is Ion-translocating oxidoreductase complex subunit B, found in Haemophilus influenzae (strain 86-028NP).